The primary structure comprises 471 residues: 5-hydroxytryptamine receptor 2A (471 aa).

The Extracellular segment spans residues 1–80; sequence MEILCEDNIS…LQEKNWSALL (80 aa). 5 N-linked (GlcNAc...) asparagine glycosylation sites follow: N8, N38, N44, N51, and N54. Residues 81 to 97 form a helical membrane-spanning segment; that stretch reads TTVVIILTIAGNILVIM. Over 98–111 the chain is Cytoplasmic; that stretch reads AVSLEKKLQNATNY. A helical membrane pass occupies residues 112 to 137; it reads FLMSLAIADMLLGFLVMPVSMLTILY. The Extracellular portion of the chain corresponds to 138 to 146; that stretch reads GYRWPLPSK. A helical transmembrane segment spans residues 147–171; the sequence is LCAVWIYLDVLFSTASIMHLCAISL. C148 and C227 form a disulfide bridge. A serotonin-binding site is contributed by D155. The DRY motif; important for ligand-induced conformation changes motif lies at 172–174; that stretch reads DRY. At 172–191 the chain is on the cytoplasmic side; that stretch reads DRYVAIQNPIHHSRFNSRTK. The chain crosses the membrane as a helical span at residues 192–215; it reads AFLKIIAVWTISVGISMPIPVFGL. At 216 to 232 the chain is on the extracellular side; sequence QDDSKVFKEGSCLLADD. A helical membrane pass occupies residues 233–258; that stretch reads NFVLIGSFVAFFIPLTIMVITYFLTI. Residues 259–322 are Cytoplasmic-facing; sequence KSLQKEATLC…QSISNEQKAC (64 aa). Position 280 is a phosphoserine (S280). The chain crosses the membrane as a helical span at residues 323-348; that stretch reads KVLGIVFFLFVVMWCPFFITNIMAVI. N343 serves as a coordination point for serotonin. C349 and C353 are oxidised to a cystine. The Extracellular portion of the chain corresponds to 349-356; it reads CKESCNEN. Residues 357-382 form a helical membrane-spanning segment; sequence VIGALLNVFVWIGYLSSAVNPLVYTL. Residues 376-380 carry the NPxxY motif; important for ligand-induced conformation changes and signaling motif; it reads NPLVY. Residues 383–471 are Cytoplasmic-facing; the sequence is FNKTYRSAFS…ETVNEKVSCV (89 aa). Residues 469–471 carry the PDZ-binding motif; sequence SCV.

This sequence belongs to the G-protein coupled receptor 1 family. In terms of assembly, interacts (via C-terminus) with MPDZ and PATJ. May interact (via C-terminus) with MPP3, PRDX6, DLG4, DLG1, CASK, APBA1 and MAGI2. Interacts with GRM2 and DRD2; this may affect signaling. Detected in neurons in brain cortex. Detected in adult intestine, especially in mucosal epithelium, longitudinal and circular layers of muscularis externa and myenteric plexuses. Highly expressed in Paneth cells, and detected at lower levels in enterocytes (at protein level). Detected in neurons in the brain cortex.

Its subcellular location is the cell membrane. It is found in the cell projection. The protein localises to the dendrite. The protein resides in the axon. It localises to the cytoplasmic vesicle. Its subcellular location is the membrane. It is found in the caveola. The protein localises to the presynapse. Its activity is regulated as follows. G-protein coupled receptor activity is regulated by lipids: oleamide increases HTR2A-mediated activity. Functionally, G-protein coupled receptor for 5-hydroxytryptamine (serotonin). Also functions as a receptor for various drugs and psychoactive substances, including mescaline, psilocybin, 1-(2,5-dimethoxy-4-iodophenyl)-2-aminopropane (DOI) and lysergic acid diethylamide (LSD). Ligand binding causes a conformation change that triggers signaling via guanine nucleotide-binding proteins (G proteins) and modulates the activity of downstream effectors. HTR2A is coupled to G(q)/G(11) G alpha proteins and activates phospholipase C-beta, releasing diacylglycerol (DAG) and inositol 1,4,5-trisphosphate (IP3) second messengers that modulate the activity of phosphatidylinositol 3-kinase and promote the release of Ca(2+) ions from intracellular stores, respectively. Beta-arrestin family members inhibit signaling via G proteins and mediate activation of alternative signaling pathways. Affects neural activity, perception, cognition and mood. Plays a role in the regulation of behavior, including responses to anxiogenic situations and psychoactive substances. Plays a role in intestinal smooth muscle contraction, and may play a role in arterial vasoconstriction. This chain is 5-hydroxytryptamine receptor 2A (Htr2a), found in Mus musculus (Mouse).